A 127-amino-acid polypeptide reads, in one-letter code: uncharacterized protein (127 aa).

The protein resides in the mitochondrion. This is an uncharacterized protein from Arabidopsis thaliana (Mouse-ear cress).